The primary structure comprises 471 residues: Glutamate--tRNA ligase (471 aa).

A 'HIGH' region motif is present at residues 9 to 19; it reads PSPTGYLHVGG. Residues cysteine 98, cysteine 100, cysteine 125, and histidine 127 each coordinate Zn(2+). Positions 237–241 match the 'KMSKS' region motif; that stretch reads KLSKR. ATP is bound at residue lysine 240.

The protein belongs to the class-I aminoacyl-tRNA synthetase family. Glutamate--tRNA ligase type 1 subfamily. Monomer. Zn(2+) is required as a cofactor.

The protein localises to the cytoplasm. It carries out the reaction tRNA(Glu) + L-glutamate + ATP = L-glutamyl-tRNA(Glu) + AMP + diphosphate. In terms of biological role, catalyzes the attachment of glutamate to tRNA(Glu) in a two-step reaction: glutamate is first activated by ATP to form Glu-AMP and then transferred to the acceptor end of tRNA(Glu). The polypeptide is Glutamate--tRNA ligase (Enterobacter sp. (strain 638)).